The sequence spans 198 residues: RxLR effector protein Htp1 (198 aa).

Residues methionine 1–alanine 23 form the signal peptide. The RxLR signature appears at arginine 46 to arginine 49. 2 disordered regions span residues leucine 48–lysine 101 and threonine 115–aspartate 198. A glycan (N-linked (GlcNAc...) asparagine) is linked at asparagine 70. The span at asparagine 70–glutamate 91 shows a compositional bias: polar residues. The segment covering aspartate 126–valine 137 has biased composition (acidic residues). Residues alanine 173–alanine 191 are compositionally biased toward low complexity.

The protein belongs to the RxLR effector family. In terms of assembly, interacts with the effector Htp3 within the host cells.

It localises to the secreted. It is found in the host cell. Its function is as follows. Effector involved in the disease saprolegniosis in salmonids and other freshwater fish, resulting in considerable economic losses in aquaculture. Within the host fish cells, Htp1 is involved in the uptake of the S.parasitica effector Htp3 at a neutral pH (pH 7.5) and its release from vesicles into host cytosol where it degrades nucleic acids. The polypeptide is RxLR effector protein Htp1 (Saprolegnia parasitica (strain CBS 223.65)).